Consider the following 334-residue polypeptide: Protein OPG181 (334 aa).

This sequence belongs to the orthopoxvirus OPG181 family.

The polypeptide is Protein OPG181 (OPG181) (Bos taurus (Bovine)).